The primary structure comprises 281 residues: Phosphatidylglycerol--prolipoprotein diacylglyceryl transferase (281 aa).

Helical transmembrane passes span 23–43 (VGPLAVHWYGLGYVVGILFAW), 71–91 (FVIWAALGVVLGGRIGYVLFY), 107–127 (WDGGMSFHGGILGTTLAMILF), and 133–153 (ILVWSMFDTIAAGVPIGLGVV). Residue Arg154 coordinates a 1,2-diacyl-sn-glycero-3-phospho-(1'-sn-glycerol). 3 helical membrane-spanning segments follow: residues 189–209 (LYEAFLEGLVLFFVLFVLVWG), 217–237 (GFVAGAFVTGYGLSRIAVEFF), and 247–267 (LFGGWLTMGMVLSVPMVLLGL).

The protein belongs to the Lgt family.

Its subcellular location is the cell inner membrane. The enzyme catalyses L-cysteinyl-[prolipoprotein] + a 1,2-diacyl-sn-glycero-3-phospho-(1'-sn-glycerol) = an S-1,2-diacyl-sn-glyceryl-L-cysteinyl-[prolipoprotein] + sn-glycerol 1-phosphate + H(+). Its pathway is protein modification; lipoprotein biosynthesis (diacylglyceryl transfer). Catalyzes the transfer of the diacylglyceryl group from phosphatidylglycerol to the sulfhydryl group of the N-terminal cysteine of a prolipoprotein, the first step in the formation of mature lipoproteins. In Brucella abortus (strain S19), this protein is Phosphatidylglycerol--prolipoprotein diacylglyceryl transferase.